The chain runs to 397 residues: Lipid-A-disaccharide synthase (397 aa).

This sequence belongs to the LpxB family.

It carries out the reaction a lipid X + a UDP-2-N,3-O-bis[(3R)-3-hydroxyacyl]-alpha-D-glucosamine = a lipid A disaccharide + UDP + H(+). It participates in bacterial outer membrane biogenesis; LPS lipid A biosynthesis. Its function is as follows. Condensation of UDP-2,3-diacylglucosamine and 2,3-diacylglucosamine-1-phosphate to form lipid A disaccharide, a precursor of lipid A, a phosphorylated glycolipid that anchors the lipopolysaccharide to the outer membrane of the cell. The protein is Lipid-A-disaccharide synthase of Mannheimia succiniciproducens (strain KCTC 0769BP / MBEL55E).